The following is a 338-amino-acid chain: Ketol-acid reductoisomerase (NADP(+)) (338 aa).

Positions 1–181 constitute a KARI N-terminal Rossmann domain; it reads MKVFYDKDCD…GGGRAGIIET (181 aa). Residues 24-27, arginine 47, and serine 52 each bind NADP(+); that span reads YGSQ. Histidine 107 is a catalytic residue. Residue glycine 133 participates in NADP(+) binding. A KARI C-terminal knotted domain is found at 182 to 327; it reads DFREETETDL…GKLRAMMPWI (146 aa). Positions 190, 194, 226, and 230 each coordinate Mg(2+). Substrate is bound at residue serine 251.

The protein belongs to the ketol-acid reductoisomerase family. Requires Mg(2+) as cofactor.

It catalyses the reaction (2R)-2,3-dihydroxy-3-methylbutanoate + NADP(+) = (2S)-2-acetolactate + NADPH + H(+). It carries out the reaction (2R,3R)-2,3-dihydroxy-3-methylpentanoate + NADP(+) = (S)-2-ethyl-2-hydroxy-3-oxobutanoate + NADPH + H(+). It participates in amino-acid biosynthesis; L-isoleucine biosynthesis; L-isoleucine from 2-oxobutanoate: step 2/4. Its pathway is amino-acid biosynthesis; L-valine biosynthesis; L-valine from pyruvate: step 2/4. Involved in the biosynthesis of branched-chain amino acids (BCAA). Catalyzes an alkyl-migration followed by a ketol-acid reduction of (S)-2-acetolactate (S2AL) to yield (R)-2,3-dihydroxy-isovalerate. In the isomerase reaction, S2AL is rearranged via a Mg-dependent methyl migration to produce 3-hydroxy-3-methyl-2-ketobutyrate (HMKB). In the reductase reaction, this 2-ketoacid undergoes a metal-dependent reduction by NADPH to yield (R)-2,3-dihydroxy-isovalerate. In Bordetella petrii (strain ATCC BAA-461 / DSM 12804 / CCUG 43448), this protein is Ketol-acid reductoisomerase (NADP(+)).